Here is a 604-residue protein sequence, read N- to C-terminus: Protein TAX4 (604 aa).

Disordered stretches follow at residues 38-77, 132-249, 267-299, 338-380, and 394-428; these read HPNGNAGSAERPRHLKVESAPVVKSEPSLPRMRQPEPRSI, SFSN…RQQE, GTLPDLIPRSQRKTSKPRFKHRLLRSPEQQQEN, DETF…KGLK, and PFPHHHHHHHQLHNPNSHHLHTHHHTSSHKFNEDK. Positions 176–185 are enriched in polar residues; it reads YDNNVRSRSI. 2 stretches are compositionally biased toward low complexity: residues 186–203 and 224–240; these read SPQVSYSTSLSSSCSISS and SMSSYSLASKASAKASL. Basic residues-rich tracts occupy residues 276–290, 366–379, and 396–421; these read SQRKTSKPRFKHRLL, KKKKSRRSKIKKGL, and PHHHHHHHQLHNPNSHHLHTHHHTSS. The region spanning 469-559 is the EH domain; sequence ANEDDESHLQ…RVWNSVDGYV (91 aa).

It belongs to the IRS4 family. In terms of assembly, interacts with INP51.

Its function is as follows. With IRS4, acts as a positive regulator of INP51 activity and phosphatidylinositol 4,5-bisphosphate turnover. Negatively regulates signaling through the cell integrity pathway, including the MAP kinase SLT2. This chain is Protein TAX4 (TAX4), found in Saccharomyces cerevisiae (strain ATCC 204508 / S288c) (Baker's yeast).